The primary structure comprises 580 residues: F-box only protein 24 (580 aa).

The region spanning 36–82 is the F-box domain; that stretch reads PISIQLFPPELVEHIISFLPVRDLVALGQTCRYFHEVCDGEGVWRRI. The stretch at 376–425 is one RCC1 repeat; the sequence is GRIFMQGNNRYGQLGTGDKMDRGEPTQVCYLQRPITLWCGLNHSLVLSQS.

Directly interacts with SKP1 and CUL1.

In terms of biological role, substrate-recognition component of the SCF (SKP1-CUL1-F-box protein)-type E3 ubiquitin ligase complex. The chain is F-box only protein 24 (FBXO24) from Homo sapiens (Human).